We begin with the raw amino-acid sequence, 853 residues long: DNA mismatch repair protein MutS (853 aa).

Position 614–621 (614–621 (GPNMGGKS)) interacts with ATP.

This sequence belongs to the DNA mismatch repair MutS family.

In terms of biological role, this protein is involved in the repair of mismatches in DNA. It is possible that it carries out the mismatch recognition step. This protein has a weak ATPase activity. The protein is DNA mismatch repair protein MutS of Klebsiella pneumoniae subsp. pneumoniae (strain ATCC 700721 / MGH 78578).